A 677-amino-acid polypeptide reads, in one-letter code: Testis-specific Y-encoded-like protein 2 (677 aa).

Residues 1–54 (MDRPDEGPPAKTPRLSSSEPRQRDLPPPPPPPLQRLPLPPPQQRPRPQEETEAA) are disordered. Residue Lys11 forms a Glycyl lysine isopeptide (Lys-Gly) (interchain with G-Cter in SUMO2) linkage. Ser18 bears the Phosphoserine mark. Over residues 25–44 (LPPPPPPPLQRLPLPPPQQR) the composition is skewed to pro residues. Residues Lys158 and Lys160 each participate in a glycyl lysine isopeptide (Lys-Gly) (interchain with G-Cter in SUMO2) cross-link. The disordered stretch occupies residues 175-202 (KESVRRRQRRRRRRRKQRKAKESRERSA). The span at 178-193 (VRRRQRRRRRRRKQRK) shows a compositional bias: basic residues. At Thr333 the chain carries Phosphothreonine. Residues 469 to 658 (ANENLCDSEN…EVNSEDSDIQ (190 aa)) form a disordered region. The segment covering 484–493 (GYNTKITDNK) has biased composition (polar residues). Basic and acidic residues predominate over residues 509 to 525 (EKNTYDSEDSNSEKADG). Over residues 526 to 540 (DNTTLRDNQQVTNIQ) the composition is skewed to polar residues. 2 stretches are compositionally biased toward acidic residues: residues 543 to 581 (SDSD…DDDD) and 606 to 627 (DYEE…ETSE). Over residues 639–650 (DERIYGEERSEV) the composition is skewed to basic and acidic residues. 3 positions are modified to phosphoserine: Ser648, Ser652, and Ser655.

This sequence belongs to the nucleosome assembly protein (NAP) family. As to quaternary structure, interacts with histones. Interacts with CASK. Part of a complex containing CASK, TBR1 and TSPYL2. Phosphorylation at Thr-333 impairs function on cell proliferation. In terms of tissue distribution, present at high levels in the pituitary gland and at moderate levels in adrenal gland, brain, testis and ovary. In brain, expressed both in mature neurons and progenitor cells (at protein level).

The protein localises to the nucleus. The protein resides in the cytoplasm. Part of the CASK/TBR1/TSPYL2 transcriptional complex which modulates gene expression in response to neuronal synaptic activity, probably by facilitating nucleosome assembly. May inhibit cell proliferation by inducing p53-dependent CDKN1A expression. The sequence is that of Testis-specific Y-encoded-like protein 2 (Tspyl2) from Mus musculus (Mouse).